A 335-amino-acid chain; its full sequence is Probable deoxyhypusine synthase (335 aa).

The Nucleophile role is filled by lysine 307.

Belongs to the deoxyhypusine synthase family. NAD(+) serves as cofactor.

It carries out the reaction [eIF5A protein]-L-lysine + spermidine = [eIF5A protein]-deoxyhypusine + propane-1,3-diamine. It participates in protein modification; eIF5A hypusination. Catalyzes the NAD-dependent oxidative cleavage of spermidine and the subsequent transfer of the butylamine moiety of spermidine to the epsilon-amino group of a specific lysine residue of the eIF-5A precursor protein to form the intermediate deoxyhypusine residue. The chain is Probable deoxyhypusine synthase (dys) from Pyrococcus abyssi (strain GE5 / Orsay).